A 445-amino-acid chain; its full sequence is Retrovirus-related Pol polyprotein from type-1 retrotransposable element R2 (445 aa).

The region spanning 1–114 (QPSVFNLVKW…LSRDDSLAKA (114 aa)) is the Reverse transcriptase domain. The segment at 115 to 445 (MLASAGPAAE…GATPRQLIEY (331 aa)) is nucleic acid-binding endonuclease. Residues 380–389 (GPRPAHHHQP) are compositionally biased toward basic residues. Positions 380-445 (GPRPAHHHQP…GATPRQLIEY (66 aa)) are disordered. Positions 396-405 (ATANTGTLQS) are enriched in polar residues.

It catalyses the reaction DNA(n) + a 2'-deoxyribonucleoside 5'-triphosphate = DNA(n+1) + diphosphate. The sequence is that of Retrovirus-related Pol polyprotein from type-1 retrotransposable element R2 from Popillia japonica (Japanese beetle).